The primary structure comprises 585 residues: Glycerol-3-phosphate dehydrogenase (585 aa).

An FAD-binding site is contributed by 37 to 65 (DVVVIGGGVVGSGCALDAATRGLKVALVE).

It belongs to the FAD-dependent glycerol-3-phosphate dehydrogenase family. Requires FAD as cofactor.

The protein localises to the cytoplasm. It carries out the reaction a quinone + sn-glycerol 3-phosphate = dihydroxyacetone phosphate + a quinol. The sequence is that of Glycerol-3-phosphate dehydrogenase (glpD) from Mycobacterium leprae (strain TN).